The following is a 338-amino-acid chain: Anthranilate phosphoribosyltransferase (338 aa).

5-phospho-alpha-D-ribose 1-diphosphate-binding positions include Gly-81, 84–85 (GD), Thr-89, 91–94 (NIST), 109–117 (KHGNRALSS), and Ala-121. Gly-81 is a binding site for anthranilate. Ser-93 contributes to the Mg(2+) binding site. Anthranilate is bound at residue Asn-112. An anthranilate-binding site is contributed by Arg-167. Mg(2+) is bound by residues Asp-225 and Glu-226.

The protein belongs to the anthranilate phosphoribosyltransferase family. In terms of assembly, homodimer. Mg(2+) is required as a cofactor.

It carries out the reaction N-(5-phospho-beta-D-ribosyl)anthranilate + diphosphate = 5-phospho-alpha-D-ribose 1-diphosphate + anthranilate. It functions in the pathway amino-acid biosynthesis; L-tryptophan biosynthesis; L-tryptophan from chorismate: step 2/5. Catalyzes the transfer of the phosphoribosyl group of 5-phosphorylribose-1-pyrophosphate (PRPP) to anthranilate to yield N-(5'-phosphoribosyl)-anthranilate (PRA). This chain is Anthranilate phosphoribosyltransferase, found in Rhizobium etli (strain ATCC 51251 / DSM 11541 / JCM 21823 / NBRC 15573 / CFN 42).